Here is a 722-residue protein sequence, read N- to C-terminus: Bifunctional UDP-N-acetylglucosamine 2-epimerase/N-acetylmannosamine kinase (722 aa).

UDP contacts are provided by arginine 19, serine 23, arginine 113, histidine 220, and asparagine 253. Lysine 259, glutamate 271, lysine 280, and histidine 281 together coordinate CMP-N-acetyl-beta-neuraminate. Positions 282, 301, 302, 307, and 321 each coordinate UDP. An N-acetylmannosamine kinase region spans residues 406-722 (TLSALAVDLG…VLDYTTRRIY (317 aa)). Residue aspartate 413 coordinates Mg(2+). Glycine 416 serves as a coordination point for an N-acyl-D-mannosamine 6-phosphate. Positions 417, 418, and 420 each coordinate ADP. An N-acyl-D-mannosamine 6-phosphate is bound by residues glycine 476, arginine 477, threonine 489, asparagine 516, aspartate 517, and glycine 545. Residues glycine 476, arginine 477, threonine 489, asparagine 516, and aspartate 517 each contribute to the an N-acyl-D-mannosamine site. Aspartate 517 is a catalytic residue. An N-acyl-D-mannosamine-binding residues include glutamate 566 and histidine 569. Residue histidine 569 participates in an N-acyl-D-mannosamine 6-phosphate binding. Zn(2+) contacts are provided by histidine 569, cysteine 579, cysteine 581, and cysteine 586. Glutamate 588 serves as a coordination point for an N-acyl-D-mannosamine 6-phosphate. Glutamate 588 serves as a coordination point for an N-acyl-D-mannosamine.

The protein in the N-terminal section; belongs to the UDP-N-acetylglucosamine 2-epimerase family. In the C-terminal section; belongs to the ROK (NagC/XylR) family. As to quaternary structure, homodimer. Homotetramer. Homohexamer. The hexameric form exhibits both enzyme activities, whereas the dimeric form only catalyzes the phosphorylation of N-acyl-D-mannosamine. Post-translationally, phosphorylated. Phosphorylation by PKC activates the UDP-N-acetylglucosamine 2-epimerase activity. As to expression, highest expression in liver and placenta. Also found in heart, brain, lung, kidney, skeletal muscle and pancreas. Isoform 1 is expressed in heart, brain, kidney, liver, placenta, lung, spleen, pancreas, skeletal muscle and colon. Isoform 2 is expressed mainly in placenta, but also in brain, kidney, liver, lung, pancreas and colon. Isoform 3 is expressed at low level in kidney, liver, placenta and colon.

The protein localises to the cytoplasm. It is found in the cytosol. It catalyses the reaction UDP-N-acetyl-alpha-D-glucosamine + H2O = aldehydo-N-acetyl-D-mannosamine + UDP + H(+). It carries out the reaction an N-acyl-D-mannosamine + ATP = an N-acyl-D-mannosamine 6-phosphate + ADP + H(+). It functions in the pathway amino-sugar metabolism; N-acetylneuraminate biosynthesis. Its activity is regulated as follows. The UDP-N-acetylglucosamine 2-epimerase activity, in contrast to the N-acetylmannosamine kinase activity, exhibits allosteric regulation by cytidine monophosphate-N-acetylneuraminic acid (CMP-Neu5Ac), the end product of neuraminic acid biosynthesis. Moreover, the activity is contingent upon the oligomeric state of the enzyme. The monomeric form is inactive, while the dimeric form selectively catalyzes the phosphorylation of N-acetylmannosamine. The hexameric form, on the other hand, demonstrates full proficiency in both enzyme activities. Furthermore, the UDP-N-acetylglucosamine 2-epimerase activity is increased by PKC-mediated phosphorylation. In terms of biological role, bifunctional enzyme that possesses both UDP-N-acetylglucosamine 2-epimerase and N-acetylmannosamine kinase activities, and serves as the initiator of the biosynthetic pathway leading to the production of N-acetylneuraminic acid (NeuAc), a critical precursor in the synthesis of sialic acids. By catalyzing this pivotal and rate-limiting step in sialic acid biosynthesis, this enzyme assumes a pivotal role in governing the regulation of cell surface sialylation, playing a role in embryonic angiogenesis. Sialic acids represent a category of negatively charged sugars that reside on the surface of cells as terminal components of glycoconjugates and mediate important functions in various cellular processes, including cell adhesion, signal transduction, and cellular recognition. The chain is Bifunctional UDP-N-acetylglucosamine 2-epimerase/N-acetylmannosamine kinase from Homo sapiens (Human).